Here is a 311-residue protein sequence, read N- to C-terminus: tRNA-cytidine(32) 2-sulfurtransferase (311 aa).

The PP-loop motif motif lies at 47-52; that stretch reads SGGKDS. [4Fe-4S] cluster is bound by residues Cys-122, Cys-125, and Cys-213.

Belongs to the TtcA family. In terms of assembly, homodimer. Mg(2+) is required as a cofactor. Requires [4Fe-4S] cluster as cofactor.

Its subcellular location is the cytoplasm. The catalysed reaction is cytidine(32) in tRNA + S-sulfanyl-L-cysteinyl-[cysteine desulfurase] + AH2 + ATP = 2-thiocytidine(32) in tRNA + L-cysteinyl-[cysteine desulfurase] + A + AMP + diphosphate + H(+). It functions in the pathway tRNA modification. Its function is as follows. Catalyzes the ATP-dependent 2-thiolation of cytidine in position 32 of tRNA, to form 2-thiocytidine (s(2)C32). The sulfur atoms are provided by the cysteine/cysteine desulfurase (IscS) system. The polypeptide is tRNA-cytidine(32) 2-sulfurtransferase (Salmonella paratyphi A (strain ATCC 9150 / SARB42)).